Reading from the N-terminus, the 470-residue chain is Crh-like protein UTR2 (470 aa).

An N-terminal signal peptide occupies residues 1–23 (MRFSTLHFAFLATLSSIFTVVAA). Cysteines 58 and 69 form a disulfide. N-linked (GlcNAc...) asparagine glycans are attached at residues Asn65, Asn100, and Asn125. The 188-residue stretch at 95–282 (SDYLGNSTEA…WAGGLINWDS (188 aa)) folds into the GH16 domain. Glu168 functions as the Nucleophile in the catalytic mechanism. Residue Glu172 is the Proton donor of the active site. Position 172 (Glu172) interacts with chitin. N-linked (GlcNAc...) asparagine glycans are attached at residues Asn177, Asn194, Asn198, Asn202, Asn235, and Asn239. Positions 259 and 270 each coordinate chitin. Residues Asn314 and Asn327 are each glycosylated (N-linked (GlcNAc...) asparagine). The tract at residues 347–446 (SDDATGFDPQ…SSGSSSQGVA (100 aa)) is disordered. Composition is skewed to low complexity over residues 370 to 384 (TTIT…ITSV) and 392 to 408 (TANV…QATA). Positions 409 to 418 (KSSTGTNTYD) are enriched in polar residues. The span at 433–446 (TDSGSSGSSSQGVA) shows a compositional bias: low complexity. Ser440 is lipidated: GPI-anchor amidated serine. The propeptide at 441–470 (SSQGVANSLNESVISGIFASICLGILSFFM) is removed in mature form. Residue Asn450 is glycosylated (N-linked (GlcNAc...) asparagine).

The protein belongs to the glycosyl hydrolase 16 family. CRH1 subfamily. Post-translationally, the GPI-anchor is attached to the protein in the endoplasmic reticulum and serves to target the protein to the cell surface. There, the glucosamine-inositol phospholipid moiety is cleaved off and the GPI-modified mannoprotein is covalently attached via its lipidless GPI glycan remnant to the 1,6-beta-glucan of the outer cell wall layer.

It localises to the secreted. It is found in the cell wall. The protein resides in the membrane. It catalyses the reaction Random endo-hydrolysis of N-acetyl-beta-D-glucosaminide (1-&gt;4)-beta-linkages in chitin and chitodextrins.. Dual chitinase/transglycosylase that plays a role in cell wall architecture. Chitinase and transglycosylase activities are coupled. Required for the polysaccharide cross-linking at the septa and the cell wall. More specifically, transfers chitin to 1,6-beta-glucan in the cell wall. Plays an important role in fungal pathogenesis via its functions in cell wall assembly and regeneration, filamentation, and adherence to host cells. Acts as a cell surface antigen in acute candidemia patients. The polypeptide is Crh-like protein UTR2 (Candida albicans (strain SC5314 / ATCC MYA-2876) (Yeast)).